Here is a 2194-residue protein sequence, read N- to C-terminus: Supervillin (2194 aa).

The interaction with MYLK stretch occupies residues 1–174 (MKRKERIARR…SSYSRTELSG (174 aa)). 8 disordered regions span residues 35-98 (LEED…TQSL), 118-335 (EKYG…QRRH), 388-414 (PESI…KVLE), 450-500 (EDRG…TERM), 513-563 (AVSQ…QTSK), 589-667 (RASR…KVDE), 685-719 (KSFD…QPVT), and 739-791 (HPVM…DSST). Serine 50 carries the phosphoserine modification. A compositionally biased stretch (polar residues) spans 87–98 (PYSSGIMDTQSL). Basic and acidic residues-rich tracts occupy residues 139–161 (SRKD…ESSR) and 181–192 (ESKDYGLHRSDG). Phosphoserine is present on residues serine 245 and serine 262. Composition is skewed to basic and acidic residues over residues 283 to 294 (PKHEWFLQKDSE) and 308 to 319 (KVREKLVREESA). A compositionally biased stretch (polar residues) spans 320–330 (RSSPELTSESL). Residues serine 321 and serine 322 each carry the phosphoserine modification. Polar residues predominate over residues 455-467 (GRSQEAPSGTEDL). Low complexity predominate over residues 540–551 (PPQLQALKAKAP). Composition is skewed to basic and acidic residues over residues 592-615 (RKPE…ERGS) and 626-635 (ENRKTSERFR). Phosphoserine occurs at positions 652 and 686. The span at 704-714 (QRLRRLQDRSH) shows a compositional bias: basic and acidic residues. Serine 747 and serine 781 each carry phosphoserine. A compositionally biased stretch (basic and acidic residues) spans 770–782 (LARDQTNESKDSA). A Phosphotyrosine modification is found at tyrosine 829. Threonine 831 carries the phosphothreonine modification. Serine 893, serine 899, serine 903, serine 947, serine 979, and serine 1031 each carry phosphoserine. The disordered stretch occupies residues 1036–1077 (EFGEPTSEQTGAAAGKPAAPTATPVSWKPQDPSEQPQEKRYQ). A compositionally biased stretch (low complexity) spans 1045 to 1059 (TGAAAGKPAAPTATP). 2 positions are modified to phosphoserine: serine 1099 and serine 1205. A Phosphothreonine modification is found at threonine 1210. A phosphoserine mark is found at serine 1214, serine 1302, and serine 1385. Positions 1399 to 1667 (SNVSLRSVNL…KFLDWTELKR (269 aa)) are interaction with NEB. Gelsolin-like repeat units follow at residues 1421-1520 (KKLM…LGGQ), 1540-1662 (IETN…FLDW), 1732-1842 (ISVD…FQGG), 1861-1962 (WRLY…LGRR), and 1995-2102 (ATEF…FPSW). The HP domain maps to 2131 to 2194 (KLCKTIYPLA…VNLKKAKGLF (64 aa)).

This sequence belongs to the villin/gelsolin family. As to quaternary structure, associates with F-actin. Interacts with NEB. Interacts with MYH9. Interacts with MYLK. Interacts with TASOR. Interacts with TRIP6 and DYNLT1. Interacts with KIF14; at midbody during cytokinesis.

It is found in the cell membrane. It localises to the cytoplasm. Its subcellular location is the cytoskeleton. The protein localises to the cell projection. The protein resides in the invadopodium. It is found in the podosome. It localises to the midbody. Its subcellular location is the cleavage furrow. Functionally, forms a high-affinity link between the actin cytoskeleton and the membrane. Is among the first costameric proteins to assemble during myogenesis and it contributes to myogenic membrane structure and differentiation. Appears to be involved in myosin II assembly. May modulate myosin II regulation through MLCK during cell spreading, an initial step in cell migration. May play a role in invadopodial function. In terms of biological role, may be involved in modulation of focal adhesions. Supervillin-mediated down-regulation of focal adhesions involves binding to TRIP6. Plays a role in cytokinesis through KIF14 interaction. This is Supervillin from Bos taurus (Bovine).